A 363-amino-acid chain; its full sequence is Aminomethyltransferase (363 aa).

This sequence belongs to the GcvT family. In terms of assembly, the glycine cleavage system is composed of four proteins: P, T, L and H.

The enzyme catalyses N(6)-[(R)-S(8)-aminomethyldihydrolipoyl]-L-lysyl-[protein] + (6S)-5,6,7,8-tetrahydrofolate = N(6)-[(R)-dihydrolipoyl]-L-lysyl-[protein] + (6R)-5,10-methylene-5,6,7,8-tetrahydrofolate + NH4(+). Its function is as follows. The glycine cleavage system catalyzes the degradation of glycine. The chain is Aminomethyltransferase from Staphylococcus saprophyticus subsp. saprophyticus (strain ATCC 15305 / DSM 20229 / NCIMB 8711 / NCTC 7292 / S-41).